We begin with the raw amino-acid sequence, 720 residues long: Putative glutamine--fructose-6-phosphate aminotransferase [isomerizing] (720 aa).

C2 acts as the Nucleophile; for GATase activity in catalysis. The region spanning 2–321 (CGIFGYCNFL…DNDIAHIYDG (320 aa)) is the Glutamine amidotransferase type-2 domain. A compositionally biased stretch (polar residues) spans 266–280 (STTSTFNHGSSTETP). The tract at residues 266-285 (STTSTFNHGSSTETPAENGL) is disordered. SIS domains follow at residues 393 to 532 (WLTE…DLVS) and 565 to 710 (CDKK…VDLP).

It catalyses the reaction D-fructose 6-phosphate + L-glutamine = D-glucosamine 6-phosphate + L-glutamate. It functions in the pathway nucleotide-sugar biosynthesis; UDP-N-acetyl-alpha-D-glucosamine biosynthesis; alpha-D-glucosamine 6-phosphate from D-fructose 6-phosphate: step 1/1. Its function is as follows. Involved in amino sugar synthesis (formation of chitin, supplies the amino sugars of asparagine-linked oligosaccharides of glycoproteins). This is Putative glutamine--fructose-6-phosphate aminotransferase [isomerizing] from Saccharomyces cerevisiae (strain RM11-1a) (Baker's yeast).